The primary structure comprises 192 residues: Nucleoside triphosphate pyrophosphatase (192 aa).

The active-site Proton acceptor is the Asp73.

It belongs to the Maf family. It depends on a divalent metal cation as a cofactor.

Its subcellular location is the cytoplasm. The enzyme catalyses a ribonucleoside 5'-triphosphate + H2O = a ribonucleoside 5'-phosphate + diphosphate + H(+). The catalysed reaction is a 2'-deoxyribonucleoside 5'-triphosphate + H2O = a 2'-deoxyribonucleoside 5'-phosphate + diphosphate + H(+). Nucleoside triphosphate pyrophosphatase. May have a dual role in cell division arrest and in preventing the incorporation of modified nucleotides into cellular nucleic acids. The chain is Nucleoside triphosphate pyrophosphatase from Ehrlichia ruminantium (strain Welgevonden).